We begin with the raw amino-acid sequence, 637 residues long: Probable serine/threonine-protein kinase DDB_G0283065 (637 aa).

Disordered stretches follow at residues 36–88 (NNNN…KFNR) and 155–234 (NSNN…RFNN). Residues 53–85 (NNSTTKSIDNNNNNTNNSNSNNNNNDNIKNNNK) show a composition bias toward low complexity. Residues 236-629 (FNDVRVLGKG…NQISTDYDNF (394 aa)) form the Protein kinase domain. ATP-binding positions include 242–250 (LGKGGFGIV) and lysine 265. Catalysis depends on aspartate 479, which acts as the Proton acceptor.

Belongs to the protein kinase superfamily. Ser/Thr protein kinase family. GCN2 subfamily.

The catalysed reaction is L-seryl-[protein] + ATP = O-phospho-L-seryl-[protein] + ADP + H(+). It carries out the reaction L-threonyl-[protein] + ATP = O-phospho-L-threonyl-[protein] + ADP + H(+). The sequence is that of Probable serine/threonine-protein kinase DDB_G0283065 from Dictyostelium discoideum (Social amoeba).